We begin with the raw amino-acid sequence, 279 residues long: MATSLQTKYTLNPITNNIPRSHRPSFLRVTSTTNSQPNHEMKLVVEQRLVNPPLSNDPTLQSTWTHRLWVAAGCTTVFVSFSKSIIGAFGSHLWLEPSLAGFAGYILADLGSGVYHWATDNYGDESTPLVGIHIEDSQDHHKCPWTITKRQFANNLHFMARGTTLIVLPLDLAFDDHVVHGFVSMFAFCVLFCQLFHAWAHGTKSKLPPLVVGLQDIGLLVSRIHHMNHHRAPYNNNYCVVSGVWNKVLDESNVFKAMEMVLYIQLGVRPRSWTEPNYE.

Residues 1–30 (MATSLQTKYTLNPITNNIPRSHRPSFLRVT) constitute a chloroplast transit peptide. 3 consecutive transmembrane segments (helical) span residues 68 to 90 (LWVAAGCTTVFVSFSKSIIGAFG), 98 to 118 (SLAGFAGYILADLGSGVYHWA), and 178 to 198 (VVHGFVSMFAFCVLFCQLFHA).

It belongs to the fatty acid desaturase CarF family.

Its subcellular location is the plastid. The protein localises to the chloroplast membrane. It functions in the pathway lipid metabolism; fatty acid metabolism. Functionally, fatty acid desaturase involved in the production of chloroplast-specific phosphatidylglycerol molecular species. Catalyzes the formation of a trans double bond introduced close to the carboxyl group of palmitic acid, which is specifically esterified to the sn-2 glyceryl carbon of phosphatidylglycerol. This is Fatty acid desaturase 4-like 2, chloroplastic (FAD4L2) from Arabidopsis thaliana (Mouse-ear cress).